We begin with the raw amino-acid sequence, 1256 residues long: GPI inositol-deacylase (1256 aa).

The span at 37-48 shows a compositional bias: polar residues; sequence DVYANSTTNATA. The tract at residues 37–203 is disordered; it reads DVYANSTTNA…MEKEEEQKFV (167 aa). 2 N-linked (GlcNAc...) asparagine glycosylation sites follow: Asn-41 and Asn-45. Residues 59-68 are compositionally biased toward low complexity; that stretch reads PRPSRPSQSS. Residues 69–83 show a composition bias toward polar residues; sequence AAERTSPESPSVRQS. Residues 107 to 135 show a composition bias toward low complexity; sequence QSPSQQSQNQQQQQQQQQQQQQQQQQQQS. Residues 143–156 are compositionally biased toward polar residues; the sequence is SGNFNWKLSHSRNG. Asn-155 carries N-linked (GlcNAc...) asparagine glycosylation. Residues 165-180 are compositionally biased toward low complexity; the sequence is FFSSSFSHSPSTPPLS. Positions 190 to 202 are enriched in basic and acidic residues; sequence HSKEMEKEEEQKF. Residues 214–234 traverse the membrane as a helical segment; it reads AITFVTLLISILGIGFLALVL. N-linked (GlcNAc...) asparagine glycosylation is present at Asn-235. The active site involves Ser-397. N-linked (GlcNAc...) asparagine glycosylation occurs at Asn-582. The next 2 helical transmembrane spans lie at 882–902 and 929–949; these read LYMRYRTVFAAFPLLVVTLVL and SIPLVLAFLTFLSLFIWNSSS. Asn-960 carries an N-linked (GlcNAc...) asparagine glycan. Transmembrane regions (helical) follow at residues 980-1000, 1005-1025, 1053-1073, 1103-1123, 1130-1150, and 1172-1192; these read PFFWFLVPVIGLICVGICTVF, LTLVHILSTAVSLLSFRPGWI, ILLVLVSTLIPYQFAYLVCCL, SILLLMLWILPINLPILVVWI, WLTPFSSHHNVLSIMPFIILV, and VLLFGIALYAAIYGVSYAYML. 3 N-linked (GlcNAc...) asparagine glycosylation sites follow: Asn-1212, Asn-1239, and Asn-1242.

This sequence belongs to the GPI inositol-deacylase family.

Its subcellular location is the endoplasmic reticulum membrane. Functionally, involved in inositol deacylation of GPI-anchored proteins which plays important roles in the quality control and ER-associated degradation of GPI-anchored proteins. The chain is GPI inositol-deacylase (bst-1) from Neurospora crassa (strain ATCC 24698 / 74-OR23-1A / CBS 708.71 / DSM 1257 / FGSC 987).